A 492-amino-acid chain; its full sequence is GPI alpha-1,6-mannosyltransferase 2 (492 aa).

Topologically, residues 1 to 13 are cytoplasmic; it reads MGLLDPSQKEVLK. A helical membrane pass occupies residues 14–34; it reads FAVSCRILTLVLQALFNIIIP. Topologically, residues 35–77 are lumenal; sequence DHHADAFSPPRLAPSGSVDQLVEALLGGLSRWDAEHFLFIAEH. A helical membrane pass occupies residues 78 to 98; that stretch reads GYLYEHNFAFFPGFPLALLMG. The Cytoplasmic segment spans residues 99-113; sequence TELLRPLQGLLSERS. The helical transmembrane segment at 114–134 threads the bilayer; that stretch reads CLLVSVALLNSLFSVLAAVAL. Topologically, residues 135–136 are lumenal; sequence HD. Residues 137 to 157 traverse the membrane as a helical segment; the sequence is LGCLVLHCPRQAFCAALLFCL. The Cytoplasmic segment spans residues 158-161; it reads SPAN. Residues 162–182 form a helical membrane-spanning segment; sequence VFLAAGYSEALFAFLTFSAMG. Residues 183 to 192 lie on the Lumenal side of the membrane; the sequence is QLERGRGWAS. Residues 193-213 form a helical membrane-spanning segment; it reads GLLFALAAGVRSNGLVSVGFL. Residues 214–234 lie on the Cytoplasmic side of the membrane; that stretch reads LHSQCRGFCSSLVVLDPLKGL. A helical membrane pass occupies residues 235-255; the sequence is VKLMASLCLSVLTVSLPFALF. At 256–327 the chain is on the lumenal side; the sequence is QYYAYTQFCF…RYYELRQVPN (72 aa). The chain crosses the membrane as a helical span at residues 328–348; that stretch reads FLLATPVTVLVVWATWTYVTA. Residues 349 to 378 lie on the Cytoplasmic side of the membrane; it reads HPWLCLTLGLQRTKDRESLEKPHPGFLSAK. Residues 379 to 399 traverse the membrane as a helical segment; that stretch reads VFVYLVHAAALLAFGGLCMHV. At 400-468 the chain is on the lumenal side; that stretch reads QVLTRLLGSS…NWKTCSPVTK (69 aa). A helical transmembrane segment spans residues 469-489; sequence CILVYFLTYWLLGLIMHCNFL. Residues 490-492 lie on the Cytoplasmic side of the membrane; the sequence is PWT.

Belongs to the PIGV family. Post-translationally, not N-glycosylated.

It localises to the endoplasmic reticulum membrane. It participates in glycolipid biosynthesis; glycosylphosphatidylinositol-anchor biosynthesis. Its function is as follows. Alpha-1,6-mannosyltransferase that catalyzes the transfer of the second mannose, via an alpha-1,6 bond, from a dolichol-phosphate-mannose (Dol-P-Man) to the alpha-D-Man-(1-&gt;4)-alpha-D-GlcN-(1-&gt;6)-(1-radyl,2-acyl-sn-glycero-3-phospho)-2-acyl-inositol (also termed H2) intermediate to generate an alpha-D-Man-(1-&gt;6)-alpha-D-Man-(1-&gt;4)-alpha-D-GlcN-(1-&gt;6)-(1-radyl,2-acyl-sn-glycero-3-phospho)-2-acyl-inositol (also termed H3) and participates in the seventh step of the glycosylphosphatidylinositol-anchor biosynthesis. Also transfers the second mannose on a 2-PEtn-alpha-D-Man-(1-&gt;4)-alpha-D-GlcN-(1-&gt;6)-(1-radyl,2-acyl-sn-glycero-3-phospho)-2-acyl-inositol (also termed H5). This Rattus norvegicus (Rat) protein is GPI alpha-1,6-mannosyltransferase 2.